Here is a 597-residue protein sequence, read N- to C-terminus: Elongation factor 4 (597 aa).

Positions lysine 2–lysine 184 constitute a tr-type G domain. GTP is bound by residues aspartate 14 to threonine 19 and asparagine 131 to aspartate 134.

This sequence belongs to the TRAFAC class translation factor GTPase superfamily. Classic translation factor GTPase family. LepA subfamily.

It is found in the cell inner membrane. The catalysed reaction is GTP + H2O = GDP + phosphate + H(+). In terms of biological role, required for accurate and efficient protein synthesis under certain stress conditions. May act as a fidelity factor of the translation reaction, by catalyzing a one-codon backward translocation of tRNAs on improperly translocated ribosomes. Back-translocation proceeds from a post-translocation (POST) complex to a pre-translocation (PRE) complex, thus giving elongation factor G a second chance to translocate the tRNAs correctly. Binds to ribosomes in a GTP-dependent manner. This Laribacter hongkongensis (strain HLHK9) protein is Elongation factor 4.